The following is a 231-amino-acid chain: MEVSMSLNALTRLPLKNTGRFEEVGLARHSLFSSRTACRETAVQQRRMVFVVEAKGKKGMAARQYQRTPPPMPKIEDDGNPRFVIFIRMANVYLWYPLSIIAGGTTAKIMVAAKDNLLGKYIYKDTIARNIAAVIYRDEKEIQKTAIKQHRVLRTATEFRYGYKLVENGNMRAALSTSDVIELPTQDQLKTVFDKVKDYFGDAKESFGKLSSLNPGSDEKTEETSDEKAKA.

A chloroplast-targeting transit peptide spans 1-39; the sequence is MEVSMSLNALTRLPLKNTGRFEEVGLARHSLFSSRTACR. The helical transmembrane segment at 93–113 threads the bilayer; sequence YLWYPLSIIAGGTTAKIMVAA. Residues 206–231 form a disordered region; sequence SFGKLSSLNPGSDEKTEETSDEKAKA. A compositionally biased stretch (basic and acidic residues) spans 217 to 231; sequence SDEKTEETSDEKAKA.

As to quaternary structure, interacts with psbB, psbC and LQY1, but not with psbA or psbD.

It localises to the plastid. The protein resides in the chloroplast thylakoid membrane. Functionally, involved in photoprotection. Forms a complex with LQY1 that is involved in the repair and reassembly cycle of the PSII-LHCII supercomplex under high-light conditions. May function in guiding the release of psbC from PSII core monomers. This chain is Protein HHL1, chloroplastic, found in Arabidopsis thaliana (Mouse-ear cress).